A 254-amino-acid polypeptide reads, in one-letter code: Low affinity immunoglobulin gamma Fc region receptor III-A (254 aa).

The first 20 residues, 1 to 20 (MWHLLPPSALLLLISSVTKA), serve as a signal peptide directing secretion. Residues 21-209 (ADPSKAVVLL…IAPLFPLWQQ (189 aa)) lie on the Extracellular side of the membrane. Ig-like C2-type domains lie at 23 to 104 (PSKA…VQLQ) and 121 to 174 (KGES…YYCR). Residues Asn42, Asn63, Asn166, and Asn181 are each glycosylated (N-linked (GlcNAc...) asparagine). Cystine bridges form between Cys47–Cys90 and Cys129–Cys173. The helical transmembrane segment at 210 to 230 (IAFCLMMGLLFAVDTGLYFFV) threads the bilayer. Residues 231 to 254 (RRDLRRSMVHKEEYNFKWSQAQDK) are Cytoplasmic-facing.

In terms of assembly, forms a heterooligomeric complex with ITAM-containing signaling subunits FCER1G. Interacts (via transmembrane domain) with signaling subunits; this interaction is a prerequisite for receptor complex expression on the cell surface and intracellular signal transduction. Binds the Fc region of antigen-complexed IgG. Post-translationally, N-glycosylated. In terms of processing, phosphorylated following receptor ligation.

It is found in the cell membrane. Functionally, receptor for the invariable Fc fragment of immunoglobulin gamma (IgG). Binds with intermediate affinity to both IgG2a and IgG2b. Can bind to IgG2a and IgG2b monomers. Does not display binding to IgG1 or IgG3. Recognizes neutralizing virus-specific IgGs displayed on the cell surface of infected cells and triggers antibody-dependent cellular cytotoxicity (ADCC). Confers protection to lethal influenza virus infection. On splenic dendritic cells, uptakes antigen immune complexes and efficiently divert them into MHC class I and II antigen presentation pathways to provide for superior priming of CD4-positive and CD8-positive T cell immune responses. Mediates neutrophil activation by IgG complexes redundantly with FCGR2A. Plays a role in promoting bone resorption by enhancing osteoclast differentiation following binding to IgG2a. Also acts as a receptor for the Fc region of immunoglobulin epsilon (IgE). Binds with low affinity to both the a and b allotypes of IgE. Has also been shown to bind to IgE allotype a only but not to allotype b. Binds aggregated IgE but not the monomeric form and bound monomeric IgG is readily displaced by IgE complexes. Binding to IgE promotes macrophage-mediated phagocytosis, antigen presentation to T cells, production of pro-inflammatory cytokines and the late phase of cutaneous allergic reactions. Mediates enhanced ADCC in response to afucosylated IgGs. The sequence is that of Low affinity immunoglobulin gamma Fc region receptor III-A from Cavia porcellus (Guinea pig).